The primary structure comprises 263 residues: Acyl-[acyl-carrier-protein]--UDP-N-acetylglucosamine O-acyltransferase (263 aa).

It belongs to the transferase hexapeptide repeat family. LpxA subfamily. In terms of assembly, homotrimer.

Its subcellular location is the cytoplasm. It catalyses the reaction a (3R)-hydroxyacyl-[ACP] + UDP-N-acetyl-alpha-D-glucosamine = a UDP-3-O-[(3R)-3-hydroxyacyl]-N-acetyl-alpha-D-glucosamine + holo-[ACP]. It participates in glycolipid biosynthesis; lipid IV(A) biosynthesis; lipid IV(A) from (3R)-3-hydroxytetradecanoyl-[acyl-carrier-protein] and UDP-N-acetyl-alpha-D-glucosamine: step 1/6. Functionally, involved in the biosynthesis of lipid A, a phosphorylated glycolipid that anchors the lipopolysaccharide to the outer membrane of the cell. In Campylobacter jejuni subsp. doylei (strain ATCC BAA-1458 / RM4099 / 269.97), this protein is Acyl-[acyl-carrier-protein]--UDP-N-acetylglucosamine O-acyltransferase.